We begin with the raw amino-acid sequence, 213 residues long: Isomeliandiol synthase MOI2 (213 aa).

The next 5 helical transmembrane spans lie at 18–38 (AALHAWNGLSLFLIVFISWFI), 52–72 (VLCWWALTGLIHVFQEGYYVF), 109–129 (IESMASVVLGPLSLLAAYALA), 137–157 (ILQFGVSIAQLYGACLYFLSA), and 171–191 (YWAYYVGQSSIWVIVPALIAI). The EXPERA domain occupies 48-190 (MDRVVLCWWA…IWVIVPALIA (143 aa)).

This sequence belongs to the EBP family. As to expression, mainly expressed in petioles.

It is found in the membrane. It catalyses the reaction 7,8-epoxymelianol = isomeliandiol. It functions in the pathway secondary metabolite biosynthesis; terpenoid biosynthesis. In terms of biological role, isomerase involved in the biosynthesis of limonoids triterpene natural products such as azadirachtin, an antifeedant widely used as bioinsecticide, and possessing many medicinal applications including anti-tumoral, anti-malarial, anti-rheumatic, antibacterial, anti-inflammatory, anti-pyretic and diuretic effects. Catalyzes the conversion of 7,8-epoxymelianol to isomeliandiol via skeletal rearrangements. The chain is Isomeliandiol synthase MOI2 from Melia azedarach (Chinaberry tree).